We begin with the raw amino-acid sequence, 883 residues long: MGTAGKGAWVVPAPAYREVEGWEGAGDDSPGFRCGHSLTVVAPTKGHGPRLILFGGATAIEAGASSGMPGIRLAGVTNSVHSYDVDTRRWTRLHPAGEPPSPRAAHAAAAVGTMVVFQGGIGPAGHSTDDLYVLDLTNDKFKWHRVVVQGAGPGPRYGHCMDLVAQRYLVTVSGNDGKRVLSDAWALDTAQKPYRWQKLNPDGDRPSARMYATASARTDGMLLLCGGRDASGMPLSDAYGLLMHTSGQWEWTLAPGVSPSPRYQHAAVFVGARLHVTGGVLRGGRAIEGEGAIAVLDTAAGVWLDRNGIVTSRTLKSSHDHDASSDLLRRCRHAAASVGTQIYIYGGLRGDILLDDFLVADNAPIQSEFTSSMYDRVPRAENQNRNHNFNSDSPTTNNSTDKKSIDMLTQASAAEAEAVSAVWRAAQEASHASSEDSLSEGIGSESPLSETSPMPEDLDDGGSLEPDVKLHSRAVVVSKEAVGDLGCLVRQLSLDQFENESRRMHPSSNDQSYPAKKALNRQRSPQGLHKKVISFLLKPRNWRAPAERAFFLDSYEVGELCYAAEQIFMQEPTVLQLKAPIKVFGDLHGQFGDLMRLFDEYGYPSTAGDITYIDYLFLGDYVDRGQHSLETITLLLALKIEYPENVHLIRGNHEAADINALFGFRLECIERMGESDGIWAWTRFNQLFNYLPLAAMIEKKIICMHGGIGRSINTIEQIEKLERPITMDVGSIILMDLLWSDPTENDSVEGLRPNARGPGLVTFGPDRVTEFCKRNRLQLIIRAHECVMDGFERFAHGQLITLFSATNYCGTANNAGAILVVGRGLVIVPKLIHPLPPPVNSPESSPERAMDATWMQELNIQRPPTPTRGRPQSASDRNSLAYI.

Kelch repeat units lie at residues 64 to 113, 221 to 271, 273 to 323, and 341 to 387; these read ASSG…AVGT, MLLL…VFVG, RLHV…DHDA, and QIYI…NRNH. Disordered stretches follow at residues 381 to 402, 430 to 466, and 499 to 525; these read ENQNRNHNFNSDSPTTNNSTDK, SHASSEDSLSEGIGSESPLSETSPMPEDLDDGGSLEP, and NESRRMHPSSNDQSYPAKKALNRQRSP. Over residues 385–399 the composition is skewed to polar residues; that stretch reads RNHNFNSDSPTTNNS. Mn(2+)-binding residues include Asp-586, His-588, Asp-620, and Asn-652. Residue His-653 is the Proton donor of the active site. Mn(2+)-binding residues include His-705 and His-784. Positions 861–883 are disordered; sequence QRPPTPTRGRPQSASDRNSLAYI. The segment covering 872–883 has biased composition (polar residues); that stretch reads QSASDRNSLAYI.

It belongs to the PPP phosphatase family. BSU subfamily. In terms of assembly, interacts with the phosphorylated form of BSK3. Mn(2+) serves as cofactor.

The protein localises to the nucleus. The catalysed reaction is O-phospho-L-seryl-[protein] + H2O = L-seryl-[protein] + phosphate. It catalyses the reaction O-phospho-L-threonyl-[protein] + H2O = L-threonyl-[protein] + phosphate. This Oryza sativa subsp. japonica (Rice) protein is Serine/threonine-protein phosphatase BSL1 homolog (BSL1).